We begin with the raw amino-acid sequence, 66 residues long: UPF0337 protein pc0632 (66 aa).

It belongs to the UPF0337 (CsbD) family.

The polypeptide is UPF0337 protein pc0632 (Protochlamydia amoebophila (strain UWE25)).